The following is a 107-amino-acid chain: Thioredoxin (107 aa).

In terms of domain architecture, Thioredoxin spans 2-107 (SEVLHINDAD…QLANFINQHI (106 aa)). A disulfide bridge links Cys32 with Cys35.

It belongs to the thioredoxin family.

Its function is as follows. Participates in various redox reactions through the reversible oxidation of its active center dithiol to a disulfide and catalyzes dithiol-disulfide exchange reactions. This chain is Thioredoxin (trxA), found in Haemophilus influenzae (strain ATCC 51907 / DSM 11121 / KW20 / Rd).